The following is a 127-amino-acid chain: Pleckstrin homology-like domain family A member 3 (127 aa).

The region spanning 5 to 108 is the PH domain; that stretch reads KVMNDGYLEK…RFKNRVAVQT (104 aa).

This sequence belongs to the PHLDA3 family.

It is found in the cytoplasm. The protein localises to the membrane. Functionally, p53/tp53-regulated repressor of Akt/akt1 signaling. Represses akt1 by preventing akt1-binding to membrane lipids, thereby inhibiting akt1 translocation to the cellular membrane and activation. Contributes to p53/tp53-dependent apoptosis by repressing akt1 activity. Its direct transcription regulation by p53/tp53 may explain how p53/tp53 can negatively regulate akt1. May act as a tumor suppressor. This Danio rerio (Zebrafish) protein is Pleckstrin homology-like domain family A member 3 (phlda3).